The sequence spans 264 residues: Accessory gland-specific peptide 26Aa (264 aa).

A signal peptide spans 1-18 (MNQILLCSPILLLLFTVA). Residues 1-138 (MNQILLCSPI…LQQRLLTEQN (138 aa)) are sufficient for promoting ovulation when expressed in females. 4 N-linked (GlcNAc...) asparagine glycosylation sites follow: asparagine 88, asparagine 122, asparagine 138, and asparagine 145. The interval 189 to 219 (LQNTRKSTKPCKKRSSKDSAPPAANQFQEAN) is disordered. Over residues 194–203 (KSTKPCKKRS) the composition is skewed to basic residues. The tract at residues 219 to 264 (NVRNTYRNKYLTLLKELSQKINNEIAKVATDVPTETNPSQGNLPTL) is necessary and sufficient for homodimerization.

As to quaternary structure, homodimer. May form a homodimer. In terms of processing, glycosylation. Post-translationally, undergoes several cleavages as it is secreted and is further processed in the recipient female. The precursor molecule is proteolytically cleaved by the seminal metalloprotease Semp1 at Lys-48 to produce CP1-N and CP1-C. Cleaved at Lys-67 by Semp1 to generate CP2-N and CP2-C. Cleavage appears to take place in the mated female genital tract. In terms of processing, cleaved at Lys-117 by Semp1 to generate CP3-N and CP3-C. Cleavage appears to take place in the mated female genital tract. In terms of tissue distribution, produced in the male accessory glands and secreted into seminal fluid (at protein level). Detected in the main cells and secondary cells of the accessory glands of 1 day old males (at protein level). In 5 day old males, confined to the secondary cells and only reappears in the main cells after mating (at protein level). Produced in adult males 3-4 hr after eclosion, levels increase reaching a peak at day 3-5 which is maintained until at least day 10 of adulthood (at protein level). In unmated male adults, levels are maintained for the first 6 days of adulthood and then gradually decrease for at least the next 8 days. In mated females, detected in the genital tract 3 minutes after the start of mating (ASM) and is secreted into the female hemolymph via the posterior vaginal wall 5 minutes ASM (at protein level).

It localises to the secreted. Its subcellular location is the cytoplasm. Male seminal protein which enhances ovulation in female Drosophila by stimulating the release of oocytes by the ovary following mating. Acts by increasing octopamine (OA) neuronal signaling in the female genital tract leading to the postmating relaxation of the oviduct muscles. This activation of the OA signaling pathway is likely to indirectly contribute to the mating-dependent increase in the number of OA synaptic sites in the female reproductive tract. Functionally, male seminal peptide which is able to enhance ovulation in female Drosophila. This is Accessory gland-specific peptide 26Aa from Drosophila melanogaster (Fruit fly).